The chain runs to 660 residues: Arginine--tRNA ligase, cytoplasmic (660 aa).

The residue at position 1 (Met-1) is an N-acetylmethionine. Residues 1–72 (MDALVAHCSA…QAERNKPTKT (72 aa)) form a could be involved in the assembly of the multisynthetase complex region. Residues 200 to 202 (SPN), His-211, Tyr-384, Asp-388, and Gln-412 each bind L-arginine. A 'HIGH' region motif is present at residues 201 to 212 (PNIAKEMHVGHL). The interval 529-543 (NTAAYLLYAFTRIRS) is interaction with tRNA.

The protein belongs to the class-I aminoacyl-tRNA synthetase family. As to quaternary structure, interacts (via N-terminus) with AIMP1 (via N-terminus); this stimulates its catalytic activity. Interacts (via N-terminus) with LARS2 (via C-terminus). Monomer. Part of a multisubunit complex that groups tRNA ligases for Arg (RARS1), Asp (DARS1), Gln (QARS1), Ile (IARS1), Leu (LARS1), Lys (KARS1), Met (MARS1) the bifunctional ligase for Glu and Pro (EPRS1) and the auxiliary subunits AIMP1/p43, AIMP2/p38 and EEF1E1/p18. Interacts with QARS1. Part of a complex composed of RARS1, QARS1 and AIMP1.

It localises to the cytoplasm. The protein localises to the cytosol. The enzyme catalyses tRNA(Arg) + L-arginine + ATP = L-arginyl-tRNA(Arg) + AMP + diphosphate. Forms part of a macromolecular complex that catalyzes the attachment of specific amino acids to cognate tRNAs during protein synthesis. Modulates the secretion of AIMP1 and may be involved in generation of the inflammatory cytokine EMAP2 from AIMP1. In Bos taurus (Bovine), this protein is Arginine--tRNA ligase, cytoplasmic (RARS1).